A 517-amino-acid chain; its full sequence is DNA-(apurinic or apyrimidinic site) endonuclease 2 (517 aa).

Mg(2+) is bound by residues N9 and E34. The Claspin-like CKB motif signature appears at 82-90 (EEGLSGVFC). Y142 is an active-site residue. Positions 183, 185, 299, and 300 each coordinate Mg(2+). The active-site Proton donor/acceptor is D183. H300 (proton acceptor) is an active-site residue. Residues 347–362 (GNTTEESSELTGTPSF) show a composition bias toward polar residues. Residues 347 to 366 (GNTTEESSELTGTPSFTEGA) form a disordered region. Residues 395–402 (QGNLLSFF) carry the PCNA interacting protein (PIP) box motif. 4 residues coordinate Zn(2+): C463, H466, C489, and C503. A GRF-type zinc finger spans residues 463 to 512 (CKGHSEPCVLRTVKKAGPNCGRQFYVCARPEGHSSNPQARCNFFLWLTKK).

This sequence belongs to the DNA repair enzymes AP/ExoA family. As to quaternary structure, interacts (via PIP box and GRF-type Zinc finger domain) with pcna; the interaction is required for 3 -5 SSB end resection, assembly of a checkpoint protein complex to SSB sites, and SSB signaling. Interacts with chek1. Mg(2+) is required as a cofactor. The cofactor is Mn(2+). As to expression, expressed in eggs (at protein level).

The protein resides in the nucleus. Its subcellular location is the chromosome. It localises to the cytoplasm. It is found in the mitochondrion. It catalyses the reaction Exonucleolytic cleavage in the 3'- to 5'-direction to yield nucleoside 5'-phosphates.. With respect to regulation, 3'-5' nuclease activity is stimulated in presence of pcna. In terms of biological role, functions as a weak apurinic/apyrimidinic (AP) endodeoxyribonuclease in the DNA base excision repair (BER) pathway of DNA lesions induced by oxidative and alkylating agents. Initiates repair of AP sites in DNA by catalyzing hydrolytic incision of the phosphodiester backbone immediately adjacent to the damage, generating a single-strand break with 5'-deoxyribose phosphate and 3'-hydroxyl ends. Exhibits 3'-5' exonuclease activity on a 3' DNA substrate; nuclease activity is stimulated by interaction with pcna. Has a preference for the 3' recessed ends over blunt-ended substrates, in both the presence and the absence of pcna. Generates single-stranded DNA (ssDNA) via 3'-5' single-strand break (SSB) end resection, thereby promoting a DNA damage response via replication protein A (rpa2)-binding to ssDNA and the recruitment of a checkpoint protein complex, including atr, atr-interacting protein atrip, and rad9, to damage sites following oxidative stress. Plays a role in reversing blocked 3' DNA ends, problematic lesions that preclude DNA synthesis. Required for chek1 phosphorylation induced by hydrogen peroxide but not by stalled replication forks. The sequence is that of DNA-(apurinic or apyrimidinic site) endonuclease 2 from Xenopus laevis (African clawed frog).